We begin with the raw amino-acid sequence, 348 residues long: Growth-regulating factor 5 (348 aa).

Residues 24–59 enclose the QLQ domain; sequence VFTAAQWAELEQQALIYKYLVAGVPVPGDLLLPIRP. Short sequence motifs (bipartite nuclear localization signal) lie at residues 94-112 and 130-137; these read KKLDPEPWRCRRTDGKKWR and RGRNRSRK. The region spanning 97–141 is the WRC domain; it reads DPEPWRCRRTDGKKWRCSKEAHPDSKYCERHMHRGRNRSRKPVES. 2 disordered regions span residues 125–165 and 306–348; these read ERHM…HDTD and LRPF…PRCD. Residues 127-136 show a composition bias toward basic residues; sequence HMHRGRNRSR. The segment covering 148-161 has biased composition (polar residues); that stretch reads PQSQPQLSNVTTAT. Residues 306 to 320 are compositionally biased toward basic and acidic residues; sequence LRPFFDEWPGRRDSW. The span at 329–340 shows a compositional bias: polar residues; it reads NQTSFSTTQLSI.

The protein belongs to the GRF family.

It is found in the nucleus. Functionally, transcription activator that plays a regulatory role in gibberellin-induced stem elongation. The protein is Growth-regulating factor 5 (GRF5) of Oryza sativa subsp. japonica (Rice).